The chain runs to 184 residues: Photosystem I assembly protein Ycf4 (184 aa).

A run of 2 helical transmembrane segments spans residues 19–39 (ISNF…LLVG) and 57–77 (IIFF…LFIS).

Belongs to the Ycf4 family.

The protein resides in the plastid. It localises to the chloroplast thylakoid membrane. In terms of biological role, seems to be required for the assembly of the photosystem I complex. The polypeptide is Photosystem I assembly protein Ycf4 (Cucumis sativus (Cucumber)).